The sequence spans 383 residues: Succinate--CoA ligase [ADP-forming] subunit beta (383 aa).

Positions 9-236 constitute an ATP-grasp domain; that stretch reads KELLGRFGLR…VEAADPQEHR (228 aa). Residues K45, 52-54, E91, A94, and E99 contribute to the ATP site; that span reads GRG. Residues N191 and D205 each coordinate Mg(2+). Substrate-binding positions include N256 and 313–315; that span reads GIT.

This sequence belongs to the succinate/malate CoA ligase beta subunit family. In terms of assembly, heterotetramer of two alpha and two beta subunits. The cofactor is Mg(2+).

The enzyme catalyses succinate + ATP + CoA = succinyl-CoA + ADP + phosphate. It catalyses the reaction GTP + succinate + CoA = succinyl-CoA + GDP + phosphate. Its pathway is carbohydrate metabolism; tricarboxylic acid cycle; succinate from succinyl-CoA (ligase route): step 1/1. Functionally, succinyl-CoA synthetase functions in the citric acid cycle (TCA), coupling the hydrolysis of succinyl-CoA to the synthesis of either ATP or GTP and thus represents the only step of substrate-level phosphorylation in the TCA. The beta subunit provides nucleotide specificity of the enzyme and binds the substrate succinate, while the binding sites for coenzyme A and phosphate are found in the alpha subunit. This is Succinate--CoA ligase [ADP-forming] subunit beta from Rubrobacter xylanophilus (strain DSM 9941 / JCM 11954 / NBRC 16129 / PRD-1).